A 418-amino-acid chain; its full sequence is MRVLILGSGVVGVATAYYLSREGHEVVVADRRDGPGMETSFANAGQVSPGYSSPWAAPGIPLKVLRWMTQPRSPFVLRPKLDWAQWRWMTQMLGNCTANAYARNKARMVRLAEYSRDQLRDLRDETGIAYDNRERGTLQLFRTQKQMDHTADDIAVLKSYGVAYEVLDRAGCIAAEPGLQWAQVPLVGGLRLPGDETGDAHLFTRELARICMERGVSFLFGTQIHGFSTQGDKITAIRSSRGDLMADAYVCALGSYSPLLLKQIGIAAPIYPVKGYSMTIPITDETHAPVSTVMDETYKIAITRLGNRIRVGGTAELAGYDTRLRQERRMTLEGSVKELFPDSGDLPAATFWSGLRPMTPDGTPIIGPTRYRNLHLNTGHGTLGWTMSCGSGRLLADMISGKRPNIDHADLAIARYAG.

An FAD-binding site is contributed by Val-3 to Tyr-17.

It belongs to the DadA oxidoreductase family. The cofactor is FAD.

The enzyme catalyses a D-alpha-amino acid + A + H2O = a 2-oxocarboxylate + AH2 + NH4(+). Its pathway is amino-acid degradation; D-alanine degradation; NH(3) and pyruvate from D-alanine: step 1/1. Oxidative deamination of D-amino acids. The chain is D-amino acid dehydrogenase from Granulibacter bethesdensis (strain ATCC BAA-1260 / CGDNIH1).